We begin with the raw amino-acid sequence, 97 residues long: Serine protease inhibitor Kazal-type 8 (97 aa).

Positions 1–21 (MKGICSDAILVLATSMWMAFA) are cleaved as a signal peptide. The Kazal-like domain maps to 36-96 (DKTIVECLKN…TKLYDGQCEN (61 aa)). 3 disulfide bridges follow: Cys42-Cys76, Cys49-Cys73, and Cys62-Cys94. N-linked (GlcNAc...) asparagine glycosylation is present at Asn85.

The protein localises to the secreted. Its function is as follows. Probable serine protease inhibitor. In Homo sapiens (Human), this protein is Serine protease inhibitor Kazal-type 8 (SPINK8).